Consider the following 570-residue polypeptide: Periplasmic trehalase (570 aa).

The first 34 residues, 1 to 34, serve as a signal peptide directing secretion; that stretch reads MIPPEIRRSVLLQKAIKLALAGTLLTFASFSATA. Substrate is bound by residues Arg159, 166–167, Asn203, 212–214, 284–286, and Gly317; these read WD, RSQ, and RPE. Active-site proton donor/acceptor residues include Asp319 and Glu503. Glu518 provides a ligand contact to substrate. A disordered region spans residues 544-570; it reads KPCDSVPSTRPASLSATPTKTPSAATQ. Residues 554 to 570 show a composition bias toward low complexity; it reads PASLSATPTKTPSAATQ.

It belongs to the glycosyl hydrolase 37 family. As to quaternary structure, monomer.

It is found in the periplasm. It carries out the reaction alpha,alpha-trehalose + H2O = alpha-D-glucose + beta-D-glucose. In terms of biological role, provides the cells with the ability to utilize trehalose at high osmolarity by splitting it into glucose molecules that can subsequently be taken up by the phosphotransferase-mediated uptake system. The protein is Periplasmic trehalase of Salmonella dublin (strain CT_02021853).